We begin with the raw amino-acid sequence, 460 residues long: tRNA (guanine(10)-N(2))-methyltransferase TRMT11 (460 aa).

An N-acetylalanine modification is found at alanine 2.

The protein belongs to the class I-like SAM-binding methyltransferase superfamily. TRM11 methyltransferase family. As to quaternary structure, part of the heterodimeric TRMT11-TRM112 methyltransferase complex; this complex forms an active tRNA methyltransferase, where TRMT112 acts as an activator of the catalytic subunit TRMT11.

It localises to the cytoplasm. The catalysed reaction is guanosine(10) in tRNA + S-adenosyl-L-methionine = N(2)-methylguanosine(10) in tRNA + S-adenosyl-L-homocysteine + H(+). Its function is as follows. Catalytic subunit of the TRMT11-TRM112 methyltransferase complex, that specifically mediates the S-adenosyl-L-methionine-dependent N(2)-methylation of guanosine nucleotide at position 10 (m2G10) in tRNAs. This is one of the major tRNA (guanine-N(2))-methyltransferases. The chain is tRNA (guanine(10)-N(2))-methyltransferase TRMT11 from Bos taurus (Bovine).